The primary structure comprises 188 residues: Elongation factor P (188 aa).

N6-(3,6-diaminohexanoyl)-5-hydroxylysine is present on lysine 34.

It belongs to the elongation factor P family. In terms of processing, may be beta-lysylated on the epsilon-amino group of Lys-34 by the combined action of EpmA and EpmB, and then hydroxylated on the C5 position of the same residue by EpmC (if this protein is present). Lysylation is critical for the stimulatory effect of EF-P on peptide-bond formation. The lysylation moiety may extend toward the peptidyltransferase center and stabilize the terminal 3-CCA end of the tRNA. Hydroxylation of the C5 position on Lys-34 may allow additional potential stabilizing hydrogen-bond interactions with the P-tRNA.

The protein localises to the cytoplasm. Its pathway is protein biosynthesis; polypeptide chain elongation. Functionally, involved in peptide bond synthesis. Alleviates ribosome stalling that occurs when 3 or more consecutive Pro residues or the sequence PPG is present in a protein, possibly by augmenting the peptidyl transferase activity of the ribosome. Modification of Lys-34 is required for alleviation. In Histophilus somni (strain 129Pt) (Haemophilus somnus), this protein is Elongation factor P.